The primary structure comprises 546 residues: MRIFMKSKLLVIATTALLFAACSDSFLDRAPEGNYVDATFYTSDEALEAATAPLYNRAWFDYNQRSIVPIGSGRANDMYSPWNYPQFVTFQVTALDENLSGAWSGFYSVVTMANSVINAVETQTQGSVSEAAKTKAIAEARLMRACAYFYMLRIWGPVILIEDNQKLVDNPVRPLNREEDVFQFIINDLNYAVDNLSEQSDKGRATSWAAKGILAKVYLARSGWNNGGTRDEGDLELARQYASDVCENSGLDLMTNYEDLFKYKNNNNQESLLAMQWVPLGEWYECNTLLSDLAFSTEVTGGVNCWSSYNGSIDMLQQYELADTLRRNATFFTKGSYYSYICIKDGGYTYKGTASPIKKGVPGGPDDDNDGKVKQMNSPLNTYILRLADVYLTYAEACLGNNSTLSDGRGLYFFNRVRERAKINKKSSITLDDIIRERRVEFGMEYSNWYDMVTWFRYLPDKMLNYFNNQWRGYRTDAIIKDEDGKLHFGKYDTDGTTFLEGPEYYTAPEFTINIEAEDIFLPYPESDVIQNPLLNEPPVPYTFNE.

A signal peptide spans 1–21 (MRIFMKSKLLVIATTALLFAA). Cys22 carries the N-palmitoyl cysteine lipid modification. Residue Cys22 is the site of S-diacylglycerol cysteine attachment.

This sequence belongs to the SusD family.

Its subcellular location is the cell outer membrane. Its pathway is glucan metabolism; xyloglucan degradation. In terms of biological role, polysaccharide-binding protein present at the surface of the cell. Probably mediates xyloglucan-binding before xyloglucan transport in the periplasm for degradation. This chain is SusD-like protein BACOVA_02651, found in Bacteroides ovatus (strain ATCC 8483 / DSM 1896 / JCM 5824 / BCRC 10623 / CCUG 4943 / NCTC 11153).